Here is a 478-residue protein sequence, read N- to C-terminus: MAKDKKLVEEITSMNDDFGQWYTDVIKKAELVDYSSVRGCMVIKPYGYAIWENIQKSLDTRFKETGHENVYMPMFIPESLLLKEKEHVEGFAPEVAWVTHGGDEKLTERLCVRPTSETLFCEHYSNSIQSYRDLPKLYNQWCSVVRWEKTTRPFLRTLEFLWQEGHTAHATAEEAQEETIRMLNVYADVLENVLAIPVIKGRKTEKEKFAGAHATYTVESLMHDGKALQSGTSHNFGDGFAKAFDIQYTDKNNQLQYVHQTSWGVTTRLIGAIIMVHGDDSGLVLPPAIAPTQLVIIPVSQHKEGVLEKANELKQKLSAKFRVKMDDSDKMPGWKFSEYEMKGVPLRIEIGPKDIEKNQAVLVRRDNREKIFVSLDNLEETVVNTLADVQKSLLEKARELRDKKTYIAATLEEFDQIINSTPGFVKGMWCGERECEDLVKEKTGATARCMPLEQEQLSDKCMCCGKPAKSMVYWGKAY.

It belongs to the class-II aminoacyl-tRNA synthetase family. ProS type 3 subfamily. In terms of assembly, homodimer.

The protein resides in the cytoplasm. It carries out the reaction tRNA(Pro) + L-proline + ATP = L-prolyl-tRNA(Pro) + AMP + diphosphate. In terms of biological role, catalyzes the attachment of proline to tRNA(Pro) in a two-step reaction: proline is first activated by ATP to form Pro-AMP and then transferred to the acceptor end of tRNA(Pro). This Ruminiclostridium cellulolyticum (strain ATCC 35319 / DSM 5812 / JCM 6584 / H10) (Clostridium cellulolyticum) protein is Proline--tRNA ligase.